The sequence spans 150 residues: MIP18 family protein FAM96A (150 aa).

This sequence belongs to the MIP18 family.

May play a role in chromosome segregation through establishment of sister chromatid cohesion. This Dictyostelium discoideum (Social amoeba) protein is MIP18 family protein FAM96A (fam96A).